Consider the following 600-residue polypeptide: Methionine--tRNA ligase (600 aa).

Positions 12–22 match the 'HIGH' region motif; the sequence is PYANGPRHIGH. Zn(2+) contacts are provided by Cys144, Cys147, Cys157, and Cys160. Positions 351 to 355 match the 'KMSKS' region motif; it reads KFSSS. Residue Ser354 participates in ATP binding.

It belongs to the class-I aminoacyl-tRNA synthetase family. MetG type 1 subfamily. In terms of assembly, monomer. Zn(2+) serves as cofactor.

Its subcellular location is the cytoplasm. The enzyme catalyses tRNA(Met) + L-methionine + ATP = L-methionyl-tRNA(Met) + AMP + diphosphate. In terms of biological role, is required not only for elongation of protein synthesis but also for the initiation of all mRNA translation through initiator tRNA(fMet) aminoacylation. The chain is Methionine--tRNA ligase from Chloroflexus aurantiacus (strain ATCC 29364 / DSM 637 / Y-400-fl).